The following is a 1184-amino-acid chain: Calcium-activated potassium channel subunit alpha-1a (1184 aa).

The Extracellular portion of the chain corresponds to 1–39; that stretch reads MSNNINFNKNPDSSVSISKMDVIIPFTPDVPCDNNGQRM. A helical membrane pass occupies residues 40 to 60; the sequence is WWAFLASSMVTFFGGLFIILL. Over 61 to 132 the chain is Cytoplasmic; sequence WRTLKYLWTV…MISAQTLTGR (72 aa). 3 S-palmitoyl cysteine lipidation sites follow: cysteine 71, cysteine 72, and cysteine 74. Residues 133–153 form a helical membrane-spanning segment; that stretch reads VLVVLVFALSIGALGIYFIDS. Residues 154 to 168 lie on the Extracellular side of the membrane; the sequence is SDPIESCQNFYKDFT. Residues 169 to 189 traverse the membrane as a helical segment; the sequence is LQIDMAFNVFFLLYFGLRFIA. Over 190–193 the chain is Cytoplasmic; that stretch reads ANDK. Residues 194–214 traverse the membrane as a helical segment; the sequence is LWFWLEVNSVVDFFTVPPVFV. The Extracellular portion of the chain corresponds to 215-254; it reads SVYLNRSWLGLRFLRALRLIQFSEILQFLNILKTSNSIKL. A helical transmembrane segment spans residues 255 to 275; the sequence is VNLCSIFISTWLTAAGFIHLV. At 276–289 the chain is on the cytoplasmic side; that stretch reads ENSGDPWENFQNSQ. Residues 290-310 traverse the membrane as a helical segment; that stretch reads PLSYWECVYLLMVTMSTVGYG. At 311–321 the chain is on the extracellular side; the sequence is DVYARTTLGRL. Residues 322 to 342 traverse the membrane as a helical segment; it reads FMVFFILGGLAMFASYVPEII. The Cytoplasmic portion of the chain corresponds to 343 to 1184; it reads ELIGNRKKYG…PPIREVEDEC (842 aa). Residues 361-503 form the RCK N-terminal 1 domain; it reads RKHIVVCGHI…WNWKEGDDAI (143 aa). Mg(2+) is bound by residues glutamate 393, glutamine 416, and glutamate 418. Asparagine 468 provides a ligand contact to Ca(2+). The disordered stretch occupies residues 655–677; the sequence is EHPSTLSPKKKQRNGGMRNSPNC. The residue at position 659 (threonine 659) is a Phosphothreonine. Phosphoserine occurs at positions 661, 674, and 678. Residues 735 to 879 enclose the RCK N-terminal 2 domain; the sequence is SGHVVVCIFG…MDRSSPDNSP (145 aa). Threonine 866 is subject to Phosphothreonine. A phosphoserine mark is found at serine 874 and serine 878. 4 residues coordinate Ca(2+): glutamine 908, aspartate 911, aspartate 914, and aspartate 916. Positions 908-916 match the Calcium bowl motif; that stretch reads QFLDQDDDD. A disordered region spans residues 1082 to 1143; sequence RASLSHSSHS…PEKRWFTDEA (62 aa). The segment covering 1084-1104 has biased composition (low complexity); that stretch reads SLSHSSHSSHSSSKKSSSVHS. Residues 1116 to 1125 show a composition bias toward basic and acidic residues; it reads KAREARDKQN.

Belongs to the potassium channel family. Calcium-activated (TC 1.A.1.3) subfamily. KCa1.1/KCNMA1 sub-subfamily. In terms of assembly, homotetramer; which constitutes the calcium-activated potassium channel. Phosphorylated. In terms of processing, palmitoylated.

It is found in the cell membrane. It catalyses the reaction K(+)(in) = K(+)(out). Potassium channel activated by both membrane depolarization or increase in cytosolic Ca(2+) that mediates export of K(+). It is also activated by the concentration of cytosolic Mg(2+). Its activation dampens the excitatory events that elevate the cytosolic Ca(2+) concentration and/or depolarize the cell membrane. It therefore contributes to repolarization of the membrane potential. Involved in determining peripheral auditory sensitivity. The sequence is that of Calcium-activated potassium channel subunit alpha-1a from Danio rerio (Zebrafish).